A 134-amino-acid polypeptide reads, in one-letter code: Cell division protein SepF (134 aa).

This sequence belongs to the SepF family. As to quaternary structure, homodimer. Interacts with FtsZ.

It localises to the cytoplasm. In terms of biological role, cell division protein that is part of the divisome complex and is recruited early to the Z-ring. Probably stimulates Z-ring formation, perhaps through the cross-linking of FtsZ protofilaments. Its function overlaps with FtsA. The chain is Cell division protein SepF from Caldanaerobacter subterraneus subsp. tengcongensis (strain DSM 15242 / JCM 11007 / NBRC 100824 / MB4) (Thermoanaerobacter tengcongensis).